We begin with the raw amino-acid sequence, 31 residues long: Cytochrome b6-f complex subunit 6 (31 aa).

Residues 4–24 (ITSYFGFLLAALTITSALFIG) form a helical membrane-spanning segment.

The protein belongs to the PetL family. As to quaternary structure, the 4 large subunits of the cytochrome b6-f complex are cytochrome b6, subunit IV (17 kDa polypeptide, PetD), cytochrome f and the Rieske protein, while the 4 small subunits are PetG, PetL, PetM and PetN. The complex functions as a dimer.

The protein localises to the plastid. Its subcellular location is the chloroplast thylakoid membrane. Component of the cytochrome b6-f complex, which mediates electron transfer between photosystem II (PSII) and photosystem I (PSI), cyclic electron flow around PSI, and state transitions. PetL is important for photoautotrophic growth as well as for electron transfer efficiency and stability of the cytochrome b6-f complex. This chain is Cytochrome b6-f complex subunit 6, found in Citrus sinensis (Sweet orange).